The following is a 108-amino-acid chain: Protein translation factor SUI1 (108 aa).

Residues 1–20 (MSIENLKSFDPFADTGDDEA) are disordered.

Belongs to the SUI1 family.

Its function is as follows. Additional factor that functions in concert with eIF-2 and the initiator tRNA in directing the ribosome to the proper start site of translation. The sequence is that of Protein translation factor SUI1 (SUI1A) from Eremothecium gossypii (strain ATCC 10895 / CBS 109.51 / FGSC 9923 / NRRL Y-1056) (Yeast).